A 479-amino-acid polypeptide reads, in one-letter code: Serine carboxypeptidase-like 44 (479 aa).

A signal peptide spans 1–22; it reads MVGGKWRFLEVAVVVMVLQWSC. Intrachain disulfides connect Cys92–Cys352, Cys253–Cys270, and Cys295–Cys320. Asn143 is a glycosylation site (N-linked (GlcNAc...) asparagine). The active site involves Ser184. Residue Asn265 is glycosylated (N-linked (GlcNAc...) asparagine). Residue Asn341 is glycosylated (N-linked (GlcNAc...) asparagine). Asp389 is a catalytic residue. Asn411 carries an N-linked (GlcNAc...) asparagine glycan. Residue His446 is part of the active site.

Belongs to the peptidase S10 family. In terms of tissue distribution, expressed in seedlings.

The protein resides in the secreted. In terms of biological role, probable carboxypeptidase. The chain is Serine carboxypeptidase-like 44 (SCPL44) from Arabidopsis thaliana (Mouse-ear cress).